The sequence spans 249 residues: MKLFVVLACLAAPGTFPFVDAATVIPANSFSSFSTYWNNFYPWGTDHNGSGRMASANIIVASNTLSLIATPTSNPSPPTSTSNPKPAIHYASGAIHAKEHITVTAANAYTVSGEFSAPTAVGTWPAFWLTAVSGWPPEVDIGEWKGTADNWFNTFNTSSVVKSTLVDWPTDLSFHSVKAVLTAQSNNKDVKIDFYMDNKFIVTQYGSGFVGKAMYLIINLQMEGSSGSPGPSGRTVYKARNVQVTRTGN.

A signal peptide spans 1-21 (MKLFVVLACLAAPGTFPFVDA). The region spanning 34 to 247 (STYWNNFYPW…KARNVQVTRT (214 aa)) is the GH16 domain. N-linked (GlcNAc...) asparagine glycosylation occurs at N48. E138 serves as the catalytic Nucleophile. E143 functions as the Proton donor in the catalytic mechanism. A glycan (N-linked (GlcNAc...) asparagine) is linked at N156.

The protein belongs to the glycosyl hydrolase 16 family. N-glycosylated.

It carries out the reaction The enzyme specifically hydrolyzes beta-1,3-galactan and beta-1,3-galactooligosaccharides.. Its function is as follows. Specifically hydrolyzes beta-1,3-galactan in an endo-fashion. Requires at least 3 contiguous beta-1,3-residues. The sequence is that of Galactan endo-beta-1,3-galactanase (EN3GAL) from Flammulina velutipes (Agaricus velutipes).